The sequence spans 439 residues: Cobyrinate a,c-diamide synthase (439 aa).

A GATase cobBQ-type domain is found at 238-431 (KIAVAYDKAF…AHVNFLGNIE (194 aa)). Residue Cys320 is the Nucleophile of the active site.

It belongs to the CobB/CbiA family. Mg(2+) serves as cofactor.

It catalyses the reaction cob(II)yrinate + 2 L-glutamine + 2 ATP + 2 H2O = cob(II)yrinate a,c diamide + 2 L-glutamate + 2 ADP + 2 phosphate + 2 H(+). Its pathway is cofactor biosynthesis; adenosylcobalamin biosynthesis; cob(II)yrinate a,c-diamide from sirohydrochlorin (anaerobic route): step 10/10. Its function is as follows. Catalyzes the ATP-dependent amidation of the two carboxylate groups at positions a and c of cobyrinate, using either L-glutamine or ammonia as the nitrogen source. This chain is Cobyrinate a,c-diamide synthase, found in Clostridium tetani (strain Massachusetts / E88).